A 244-amino-acid chain; its full sequence is Ribonuclease 3 (244 aa).

The 128-residue stretch at 7–134 folds into the RNase III domain; the sequence is FEEVEKTLNI…IIAAIYIDSG (128 aa). Glu47 contacts Mg(2+). Asp51 is a catalytic residue. Mg(2+) contacts are provided by Asn120 and Glu123. Glu123 is an active-site residue. A DRBM domain is found at 161 to 230; the sequence is DYKTNLQEIV…AQDALKKLKS (70 aa).

The protein belongs to the ribonuclease III family. In terms of assembly, homodimer. Requires Mg(2+) as cofactor.

It localises to the cytoplasm. It carries out the reaction Endonucleolytic cleavage to 5'-phosphomonoester.. Functionally, digests double-stranded RNA. Involved in the processing of primary rRNA transcript to yield the immediate precursors to the large and small rRNAs (23S and 16S). Processes some mRNAs, and tRNAs when they are encoded in the rRNA operon. Processes pre-crRNA and tracrRNA of type II CRISPR loci if present in the organism. The polypeptide is Ribonuclease 3 (Clostridium kluyveri (strain NBRC 12016)).